Reading from the N-terminus, the 322-residue chain is MFARQPLRFAQPLKQGFRKYSTEAPAKGKSSLAPIYISVGLAGLGVGLYRYSTASAETPVVDRPKVFTGGEQGWVDLKLSEIENLSHNTKRLRFEFADKEAVSGLQVASALLTKFKPAEGKPVIRPYTPVSDEDQPGYLDLVVKVYPNGPMSEHLHSMNVDQRLEFKGPIPKYPWETNKHKHICLIAGGTGITPMYQLARQIFKNPEDQTKVTLVFGNVSEEDILLKKELQELENTHPRRFKAFYVLDNPPKEWTGGKGYVTKELLKTVLPEPKEEDIKIFVCGPPGMYKAISGPKVSPKDQGELTGLLAELGYNKDQVYKF.

A helical transmembrane segment spans residues 32 to 48 (LAPIYISVGLAGLGVGL). The FAD-binding FR-type domain occupies 72–176 (QGWVDLKLSE…KGPIPKYPWE (105 aa)). 179-214 (KHKHICLIAGGTGITPMYQLARQIFKNPEDQTKVTL) is a binding site for FAD.

Belongs to the flavoprotein pyridine nucleotide cytochrome reductase family. It depends on FAD as a cofactor.

It is found in the mitochondrion outer membrane. It catalyses the reaction 2 Fe(III)-[cytochrome b5] + NADH = 2 Fe(II)-[cytochrome b5] + NAD(+) + H(+). May mediate the reduction of outer membrane cytochrome b5. This is NADH-cytochrome b5 reductase 2 (mcr1) from Aspergillus clavatus (strain ATCC 1007 / CBS 513.65 / DSM 816 / NCTC 3887 / NRRL 1 / QM 1276 / 107).